Here is a 167-residue protein sequence, read N- to C-terminus: Regulatory protein RecX (167 aa).

Residues 19-49 are disordered; sequence ESELRRKLASQPFSAKGHWGKQTGRSDNEPV.

This sequence belongs to the RecX family.

The protein resides in the cytoplasm. Modulates RecA activity. In Yersinia enterocolitica serotype O:8 / biotype 1B (strain NCTC 13174 / 8081), this protein is Regulatory protein RecX.